The following is a 242-amino-acid chain: MSFYGSRYFGDIVHGELGKDLFRYHGFVMMVAVAVLVFVMYMGCVILFTKFSYRHFLNRQRLEFWWTIVPMLMLVGLWXPSMINLYYMEEVKRPRWNFKAIGKQWYWSYEFCRNLDTPSSSESAESISCYTIDSYMEDQQETFSKGGYRLLDVDNRMVAPADVQMTAFVSSSDVLHSFALPKLLIKVDAIPGRINRLPMKASQCSIIYGQCSEICGVNHSFMPIVIEFIPEKYFVMWLEALN.

The Mitochondrial intermembrane portion of the chain corresponds to 1–30; sequence MSFYGSRYFGDIVHGELGKDLFRYHGFVMM. Residues 31–47 form a helical membrane-spanning segment; sequence VAVAVLVFVMYMGCVIL. Residues 48-66 lie on the Mitochondrial matrix side of the membrane; the sequence is FTKFSYRHFLNRQRLEFWW. Residues 67–83 traverse the membrane as a helical segment; sequence TIVPMLMLVGLWXPSMI. The Mitochondrial intermembrane portion of the chain corresponds to 84–242; that stretch reads NLYYMEEVKR…YFVMWLEALN (159 aa). The Cu cation site is built by H176, C211, E213, C215, H219, and M222. E213 contacts Mg(2+).

This sequence belongs to the cytochrome c oxidase subunit 2 family. As to quaternary structure, component of the cytochrome c oxidase (complex IV, CIV), a multisubunit enzyme composed of a catalytic core of 3 subunits and several supernumerary subunits. The complex exists as a monomer or a dimer and forms supercomplexes (SCs) in the inner mitochondrial membrane with ubiquinol-cytochrome c oxidoreductase (cytochrome b-c1 complex, complex III, CIII). Cu cation is required as a cofactor.

It is found in the mitochondrion inner membrane. The enzyme catalyses 4 Fe(II)-[cytochrome c] + O2 + 8 H(+)(in) = 4 Fe(III)-[cytochrome c] + 2 H2O + 4 H(+)(out). Its function is as follows. Component of the cytochrome c oxidase, the last enzyme in the mitochondrial electron transport chain which drives oxidative phosphorylation. The respiratory chain contains 3 multisubunit complexes succinate dehydrogenase (complex II, CII), ubiquinol-cytochrome c oxidoreductase (cytochrome b-c1 complex, complex III, CIII) and cytochrome c oxidase (complex IV, CIV), that cooperate to transfer electrons derived from NADH and succinate to molecular oxygen, creating an electrochemical gradient over the inner membrane that drives transmembrane transport and the ATP synthase. Cytochrome c oxidase is the component of the respiratory chain that catalyzes the reduction of oxygen to water. Electrons originating from reduced cytochrome c in the intermembrane space (IMS) are transferred via the dinuclear copper A center (CU(A)) of subunit 2 and heme A of subunit 1 to the active site in subunit 1, a binuclear center (BNC) formed by heme A3 and copper B (CU(B)). The BNC reduces molecular oxygen to 2 water molecules using 4 electrons from cytochrome c in the IMS and 4 protons from the mitochondrial matrix. This is Cytochrome c oxidase subunit 2 (COII) from Mytilus edulis (Blue mussel).